The following is a 272-amino-acid chain: 2-dehydro-3-deoxyphosphooctonate aldolase (272 aa).

The protein belongs to the KdsA family.

The protein localises to the cytoplasm. The catalysed reaction is D-arabinose 5-phosphate + phosphoenolpyruvate + H2O = 3-deoxy-alpha-D-manno-2-octulosonate-8-phosphate + phosphate. Its pathway is carbohydrate biosynthesis; 3-deoxy-D-manno-octulosonate biosynthesis; 3-deoxy-D-manno-octulosonate from D-ribulose 5-phosphate: step 2/3. It functions in the pathway bacterial outer membrane biogenesis; lipopolysaccharide biosynthesis. The protein is 2-dehydro-3-deoxyphosphooctonate aldolase of Pelobacter propionicus (strain DSM 2379 / NBRC 103807 / OttBd1).